The following is a 412-amino-acid chain: Argininosuccinate synthase (412 aa).

10–18 (AYSGGLDTS) is a binding site for ATP. Tyrosine 89 is a binding site for L-citrulline. Glycine 119 lines the ATP pocket. L-aspartate contacts are provided by threonine 121, asparagine 125, and aspartate 126. Asparagine 125 serves as a coordination point for L-citrulline. Residues arginine 129, serine 177, glutamate 261, and tyrosine 273 each contribute to the L-citrulline site.

It belongs to the argininosuccinate synthase family. Type 1 subfamily. In terms of assembly, homotetramer.

The protein resides in the cytoplasm. It catalyses the reaction L-citrulline + L-aspartate + ATP = 2-(N(omega)-L-arginino)succinate + AMP + diphosphate + H(+). Its pathway is amino-acid biosynthesis; L-arginine biosynthesis; L-arginine from L-ornithine and carbamoyl phosphate: step 2/3. The polypeptide is Argininosuccinate synthase (Bifidobacterium longum (strain NCC 2705)).